The sequence spans 341 residues: Serine/threonine-protein kinase PDIK1L (341 aa).

Residues 8–334 form the Protein kinase domain; it reads YDLIREVGRG…LELRLVQIAF (327 aa). ATP is bound by residues 14–22 and lysine 37; that span reads VGRGSYGVV. Aspartate 164 serves as the catalytic Proton acceptor.

It belongs to the protein kinase superfamily. Ser/Thr protein kinase family. As to expression, expressed in liver, kidney, pancreas, spleen, thymus and prostate.

The protein localises to the nucleus. The enzyme catalyses L-seryl-[protein] + ATP = O-phospho-L-seryl-[protein] + ADP + H(+). The catalysed reaction is L-threonyl-[protein] + ATP = O-phospho-L-threonyl-[protein] + ADP + H(+). This is Serine/threonine-protein kinase PDIK1L (PDIK1L) from Homo sapiens (Human).